Consider the following 394-residue polypeptide: Choline/ethanolamine kinase (394 aa).

An N-acetylalanine modification is found at A2. Residues 22-42 (GLLDAKCPEPIPNRRRSSSLS) are disordered. Residues 75–81 (SGGLSNL), R104, 146–152 (QYLPSRP), Q244, and D264 each bind ATP. Residue 77–79 (GLS) participates in substrate binding.

Belongs to the choline/ethanolamine kinase family. As to quaternary structure, homodimer, and heterodimer with CHKA.

It carries out the reaction choline + ATP = phosphocholine + ADP + H(+). The catalysed reaction is ethanolamine + ATP = phosphoethanolamine + ADP + H(+). Its pathway is phospholipid metabolism; phosphatidylethanolamine biosynthesis; phosphatidylethanolamine from ethanolamine: step 1/3. Functionally, has a key role in phospholipid metabolism, and catalyzes the first step of phosphatidylethanolamine and phosphatidylcholine biosynthesis. In Rattus norvegicus (Rat), this protein is Choline/ethanolamine kinase (Chkb).